A 192-amino-acid chain; its full sequence is Ion-translocating oxidoreductase complex subunit A (192 aa).

6 helical membrane passes run 5–25 (LLLLVGTVLVNNFVLVKFLGL), 39–59 (IGMSMATTFVLTLASILSYLV), 65–85 (LPFDLGYLRTMSFILVIAVVV), 102–122 (ALGIYLPLITTNCAVLGVALL), 134–154 (AIFGFGAAVGFSLVLILFSAM), and 171–191 (AIAMVTAGLMSLAFMGFTGLV).

This sequence belongs to the NqrDE/RnfAE family. As to quaternary structure, the complex is composed of six subunits: RnfA, RnfB, RnfC, RnfD, RnfE and RnfG.

It is found in the cell inner membrane. Part of a membrane-bound complex that couples electron transfer with translocation of ions across the membrane. In Shewanella piezotolerans (strain WP3 / JCM 13877), this protein is Ion-translocating oxidoreductase complex subunit A.